Reading from the N-terminus, the 332-residue chain is Adenosine receptor A2b (332 aa).

Residues 1–8 (MQLETQDA) are Extracellular-facing. The chain crosses the membrane as a helical span at residues 9–33 (LYVALELVIAALAVAGNVLVCAAVG). The Cytoplasmic segment spans residues 34 to 43 (ASSALQTPTN). A helical membrane pass occupies residues 44-67 (YFLVSLATADVAVGLFAIPFAITI). The Extracellular segment spans residues 68-78 (SLGFCTDFHGC). Residues cysteine 78 and cysteine 171 are joined by a disulfide bond. Residues 79 to 101 (LFLACFVLVLTQSSIFSLLAVAV) form a helical membrane-spanning segment. Over 102–121 (DRYLAIRVPLRYKGLVTGTR) the chain is Cytoplasmic. Residues 122 to 144 (ARGIIAVLWVLAFGIGLTPFLGW) traverse the membrane as a helical segment. The Extracellular segment spans residues 145-178 (NSKDSATSNCTELGDGIANKSCCPVTCLFENVVP). 2 N-linked (GlcNAc...) asparagine glycosylation sites follow: asparagine 153 and asparagine 163. An adenosine-binding site is contributed by glutamate 174. A helical membrane pass occupies residues 179–203 (MSYMVYFNFFGCVLPPLLIMLVIYI). Over 204–235 (KIFMVACKQLQRMELMDHSRTTLQREIHAAKS) the chain is Cytoplasmic. Residues 236–259 (LAMIVGIFALCWLPVHAINCITLF) traverse the membrane as a helical segment. Residue asparagine 254 participates in adenosine binding. At 260–267 (HPALAKDK) the chain is on the extracellular side. The chain crosses the membrane as a helical span at residues 268-291 (PKWVMNVAILLSHANSVVNPIVYA). Adenosine contacts are provided by serine 279 and histidine 280. Residues 292–332 (YRNRDFRYSFHKIISRYVLCQAETKGGSGQAGAQSTLSLGL) are Cytoplasmic-facing. Cysteine 311 carries S-palmitoyl cysteine lipidation.

Belongs to the G-protein coupled receptor 1 family.

Its subcellular location is the cell membrane. Receptor for adenosine. The activity of this receptor is mediated by G proteins which activate adenylyl cyclase. In Mus musculus (Mouse), this protein is Adenosine receptor A2b (Adora2b).